The primary structure comprises 382 residues: (R,R)-butanediol dehydrogenase (382 aa).

Cysteine 39 serves as a coordination point for Zn(2+). Serine 63 is modified (phosphoserine). Zn(2+) is bound by residues histidine 73, cysteine 103, cysteine 120, cysteine 123, cysteine 131, and glutamate 173.

This sequence belongs to the zinc-containing alcohol dehydrogenase family. As to quaternary structure, homodimer. Zn(2+) serves as cofactor.

Its subcellular location is the cytoplasm. It carries out the reaction (R,R)-butane-2,3-diol + NAD(+) = (R)-acetoin + NADH + H(+). NAD-dependent (R,R)-butanediol dehydrogenase which catalyzes oxidation of (R,R)-butane-2,3-diol to (3R)-acetoin, of meso-butanediol to (3S)-acetoin, and reduction of acetoin. Allows the use of 2,3-butanediol as an aerobic carbon source. The protein is (R,R)-butanediol dehydrogenase (BDH1) of Saccharomyces cerevisiae (strain ATCC 204508 / S288c) (Baker's yeast).